Consider the following 244-residue polypeptide: 5'-nucleotidase SurE 2 (244 aa).

Positions 8, 9, 39, and 96 each coordinate a divalent metal cation.

Belongs to the SurE nucleotidase family. The cofactor is a divalent metal cation.

The protein localises to the cytoplasm. The enzyme catalyses a ribonucleoside 5'-phosphate + H2O = a ribonucleoside + phosphate. Nucleotidase that shows phosphatase activity on nucleoside 5'-monophosphates. In Thermus thermophilus (strain ATCC BAA-163 / DSM 7039 / HB27), this protein is 5'-nucleotidase SurE 2.